A 1220-amino-acid polypeptide reads, in one-letter code: DNA-directed RNA polymerase subunit beta' (1220 aa).

Cys-61, Cys-63, Cys-76, and Cys-79 together coordinate Zn(2+). Residues Asp-450, Asp-452, and Asp-454 each coordinate Mg(2+). Residues 1197–1220 (QPESESEEASDIPKLDDVAKTFDN) are disordered. Residues 1207-1220 (DIPKLDDVAKTFDN) show a composition bias toward basic and acidic residues.

It belongs to the RNA polymerase beta' chain family. The RNAP catalytic core consists of 2 alpha, 1 beta, 1 beta' and 1 omega subunit. When a sigma factor is associated with the core the holoenzyme is formed, which can initiate transcription. Mg(2+) serves as cofactor. It depends on Zn(2+) as a cofactor.

It carries out the reaction RNA(n) + a ribonucleoside 5'-triphosphate = RNA(n+1) + diphosphate. Functionally, DNA-dependent RNA polymerase catalyzes the transcription of DNA into RNA using the four ribonucleoside triphosphates as substrates. The protein is DNA-directed RNA polymerase subunit beta' of Leuconostoc mesenteroides subsp. mesenteroides (strain ATCC 8293 / DSM 20343 / BCRC 11652 / CCM 1803 / JCM 6124 / NCDO 523 / NBRC 100496 / NCIMB 8023 / NCTC 12954 / NRRL B-1118 / 37Y).